The chain runs to 545 residues: Hydroxylamine reductase (545 aa).

Cys-3, Cys-6, Cys-15, and Cys-21 together coordinate [4Fe-4S] cluster. The hybrid [4Fe-2O-2S] cluster site is built by His-241, Glu-265, Cys-309, Cys-396, Cys-424, Cys-449, Glu-483, and Lys-485. The residue at position 396 (Cys-396) is a Cysteine persulfide.

It belongs to the HCP family. [4Fe-4S] cluster is required as a cofactor. Requires hybrid [4Fe-2O-2S] cluster as cofactor.

The protein localises to the cytoplasm. It carries out the reaction A + NH4(+) + H2O = hydroxylamine + AH2 + H(+). Catalyzes the reduction of hydroxylamine to form NH(3) and H(2)O. The sequence is that of Hydroxylamine reductase from Zymomonas mobilis subsp. mobilis (strain ATCC 31821 / ZM4 / CP4).